The following is a 496-amino-acid chain: Bifunctional protein HldE (496 aa).

Residues 1-335 form a ribokinase region; it reads MIKHNPPSPE…GALFRSHGPT (335 aa). ATP is bound at residue 211 to 214; that stretch reads NRKE. D280 is a catalytic residue. The cytidylyltransferase stretch occupies residues 363 to 496; the sequence is FTNGCFDILH…IGKLRAGSTS (134 aa).

It in the N-terminal section; belongs to the carbohydrate kinase PfkB family. In the C-terminal section; belongs to the cytidylyltransferase family. As to quaternary structure, homodimer.

The catalysed reaction is D-glycero-beta-D-manno-heptose 7-phosphate + ATP = D-glycero-beta-D-manno-heptose 1,7-bisphosphate + ADP + H(+). It carries out the reaction D-glycero-beta-D-manno-heptose 1-phosphate + ATP + H(+) = ADP-D-glycero-beta-D-manno-heptose + diphosphate. It functions in the pathway nucleotide-sugar biosynthesis; ADP-L-glycero-beta-D-manno-heptose biosynthesis; ADP-L-glycero-beta-D-manno-heptose from D-glycero-beta-D-manno-heptose 7-phosphate: step 1/4. Its pathway is nucleotide-sugar biosynthesis; ADP-L-glycero-beta-D-manno-heptose biosynthesis; ADP-L-glycero-beta-D-manno-heptose from D-glycero-beta-D-manno-heptose 7-phosphate: step 3/4. In terms of biological role, catalyzes the phosphorylation of D-glycero-D-manno-heptose 7-phosphate at the C-1 position to selectively form D-glycero-beta-D-manno-heptose-1,7-bisphosphate. Its function is as follows. Catalyzes the ADP transfer from ATP to D-glycero-beta-D-manno-heptose 1-phosphate, yielding ADP-D-glycero-beta-D-manno-heptose. In Mesorhizobium japonicum (strain LMG 29417 / CECT 9101 / MAFF 303099) (Mesorhizobium loti (strain MAFF 303099)), this protein is Bifunctional protein HldE.